The sequence spans 22 residues: Peroxidase 5 (22 aa).

The protein belongs to the peroxidase family. Classical plant (class III) peroxidase subfamily. Requires heme b as cofactor. Ca(2+) serves as cofactor.

It is found in the secreted. The protein localises to the cell wall. The catalysed reaction is 2 a phenolic donor + H2O2 = 2 a phenolic radical donor + 2 H2O. Functionally, removal of H(2)O(2), oxidation of toxic reductants, biosynthesis and degradation of lignin, suberization, auxin catabolism, response to environmental stresses such as wounding, pathogen attack and oxidative stress. These functions might be dependent on each isozyme/isoform in each plant tissue. This chain is Peroxidase 5, found in Cycas revoluta (Sago palm).